A 229-amino-acid polypeptide reads, in one-letter code: Ribonuclease S-6 (229 aa).

An N-terminal signal peptide occupies residues 1–27 (MGITGMIYMVPMVFSLIVLISCSSTMG). Residue glutamine 36 participates in RNA binding. Cysteine 42 and cysteine 49 are joined by a disulfide. An RNA-binding site is contributed by histidine 60. Residue histidine 60 is the Proton donor of the active site. A disulfide bridge connects residues cysteine 75 and cysteine 119. Asparagine 77 and asparagine 87 each carry an N-linked (GlcNAc) asparagine glycan. RNA-binding positions include 98-99 (NV), phenylalanine 108, 111-112 (RQ), and 115-116 (KH). Glutamine 112 is an active-site residue. Catalysis depends on histidine 116, which acts as the Proton acceptor. N-linked (GlcNAc...) (high mannose) asparagine glycosylation is present at asparagine 145. Disulfide bonds link cysteine 184-cysteine 222 and cysteine 199-cysteine 210. Asparagine 188 is a glycosylation site (N-linked (GlcNAc) asparagine; alternate). Asparagine 188 and asparagine 203 each carry an N-linked (GlcNAc...) asparagine; alternate glycan.

It belongs to the RNase T2 family. In terms of processing, the N-glycans attached at Asn-188 and Asn-203 consist of either monosaccharide (GlcNAc) or disaccharide (GlcNAc-GlcNAc) that could not be distinguished.

The catalysed reaction is a ribonucleotidyl-ribonucleotide-RNA + H2O = a 3'-end 3'-phospho-ribonucleotide-RNA + a 5'-end dephospho-ribonucleoside-RNA + H(+). Its function is as follows. Self-incompatibility (SI) is the inherited ability of a flowering plant to prevent self-fertilization by discriminating between self and non-self pollen during pollination. In many species, self-incompatibility is controlled by the single, multiallelic locus S. The protein is Ribonuclease S-6 of Pyrus pyrifolia (Chinese pear).